Here is a 251-residue protein sequence, read N- to C-terminus: Ubiquinone/menaquinone biosynthesis C-methyltransferase UbiE (251 aa).

S-adenosyl-L-methionine-binding positions include Thr74, Asp95, and 123-124 (NA).

It belongs to the class I-like SAM-binding methyltransferase superfamily. MenG/UbiE family.

The catalysed reaction is a 2-demethylmenaquinol + S-adenosyl-L-methionine = a menaquinol + S-adenosyl-L-homocysteine + H(+). It catalyses the reaction a 2-methoxy-6-(all-trans-polyprenyl)benzene-1,4-diol + S-adenosyl-L-methionine = a 5-methoxy-2-methyl-3-(all-trans-polyprenyl)benzene-1,4-diol + S-adenosyl-L-homocysteine + H(+). It participates in quinol/quinone metabolism; menaquinone biosynthesis; menaquinol from 1,4-dihydroxy-2-naphthoate: step 2/2. It functions in the pathway cofactor biosynthesis; ubiquinone biosynthesis. Methyltransferase required for the conversion of demethylmenaquinol (DMKH2) to menaquinol (MKH2) and the conversion of 2-polyprenyl-6-methoxy-1,4-benzoquinol (DDMQH2) to 2-polyprenyl-3-methyl-6-methoxy-1,4-benzoquinol (DMQH2). This Shewanella baltica (strain OS155 / ATCC BAA-1091) protein is Ubiquinone/menaquinone biosynthesis C-methyltransferase UbiE.